The primary structure comprises 367 residues: Glutamate 5-kinase (367 aa).

Position 10 (Lys-10) interacts with ATP. Substrate contacts are provided by Asp-137 and Asn-149. Residues 169-170 (TD) and 211-217 (TGGMATK) each bind ATP. Residues 275 to 353 (AGEITVDDGA…QQISEILGYE (79 aa)) enclose the PUA domain.

It belongs to the glutamate 5-kinase family.

The protein localises to the cytoplasm. The enzyme catalyses L-glutamate + ATP = L-glutamyl 5-phosphate + ADP. The protein operates within amino-acid biosynthesis; L-proline biosynthesis; L-glutamate 5-semialdehyde from L-glutamate: step 1/2. In terms of biological role, catalyzes the transfer of a phosphate group to glutamate to form L-glutamate 5-phosphate. This Yersinia pestis bv. Antiqua (strain Antiqua) protein is Glutamate 5-kinase.